A 245-amino-acid chain; its full sequence is Platelet-derived growth factor subunit B (245 aa).

The first 20 residues, 1-20 (MNRCWALFLSLCCYLRLVSA), serve as a signal peptide directing secretion. Residues 21 to 81 (EGDPIPEELY…ELESLSRGRR (61 aa)) constitute a propeptide, removed in mature form. Asn-63 carries N-linked (GlcNAc...) asparagine glycosylation. 3 cysteine pairs are disulfide-bonded: Cys-101/Cys-145, Cys-134/Cys-182, and Cys-138/Cys-184. A propeptide spans 195-245 (RSPGSSQEQRARTPQTRVTIRTVRVRRPPKGKHQKFKHTHDKKALKETLGA) (removed in mature form). Residues 220–235 (RRPPKGKHQKFKHTHD) show a composition bias toward basic residues. The segment at 220 to 245 (RRPPKGKHQKFKHTHDKKALKETLGA) is disordered. The span at 236 to 245 (KKALKETLGA) shows a compositional bias: basic and acidic residues.

Belongs to the PDGF/VEGF growth factor family. Antiparallel homodimer; disulfide-linked. Antiparallel heterodimer with PDGFA; disulfide-linked. The PDGFB homodimer interacts with PDGFRA and PDGFRB homodimers, and with heterodimers formed by PDGFRA and PDGFRB. The heterodimer composed of PDGFA and PDGFB interacts with PDGFRB homodimers, and with heterodimers formed by PDGFRA and PDGFRB. Interacts with XLKD1. Interacts with LRP1. Interacts with SORL1 (via the N-terminal ectodomain). Interacts with CD82; this interaction inhibits PDGFB-mediated signaling pathway.

The protein resides in the secreted. Its function is as follows. Growth factor that plays an essential role in the regulation of embryonic development, cell proliferation, cell migration, survival and chemotaxis. Potent mitogen for cells of mesenchymal origin. Required for normal proliferation and recruitment of pericytes and vascular smooth muscle cells in the central nervous system, skin, lung, heart and placenta. Required for normal blood vessel development, and for normal development of kidney glomeruli. Plays an important role in wound healing. Signaling is modulated by the formation of heterodimers with PDGFA. This Felis catus (Cat) protein is Platelet-derived growth factor subunit B (PDGFB).